The following is a 283-amino-acid chain: Protein/nucleic acid deglycase HchA (283 aa).

3 residues coordinate Zn(2+): H86, E91, and H123. The Nucleophile role is filled by C185.

Belongs to the peptidase C56 family. HchA subfamily. In terms of assembly, homodimer.

The protein localises to the cytoplasm. The enzyme catalyses N(omega)-(1-hydroxy-2-oxopropyl)-L-arginyl-[protein] + H2O = lactate + L-arginyl-[protein] + H(+). The catalysed reaction is N(6)-(1-hydroxy-2-oxopropyl)-L-lysyl-[protein] + H2O = lactate + L-lysyl-[protein] + H(+). It catalyses the reaction S-(1-hydroxy-2-oxopropyl)-L-cysteinyl-[protein] + H2O = lactate + L-cysteinyl-[protein] + H(+). It carries out the reaction N(omega)-(1-hydroxy-2-oxoethyl)-L-arginyl-[protein] + H2O = L-arginyl-[protein] + glycolate + H(+). The enzyme catalyses N(6)-(1-hydroxy-2-oxoethyl)-L-lysyl-[protein] + H2O = glycolate + L-lysyl-[protein] + H(+). The catalysed reaction is S-(1-hydroxy-2-oxoethyl)-L-cysteinyl-[protein] + H2O = glycolate + L-cysteinyl-[protein] + H(+). It catalyses the reaction N(2)-(1-hydroxy-2-oxopropyl)-dGTP + H2O = lactate + dGTP + H(+). It carries out the reaction N(2)-(1-hydroxy-2-oxopropyl)-GTP + H2O = lactate + GTP + H(+). The enzyme catalyses N(2)-(1-hydroxy-2-oxopropyl)-GDP + H2O = lactate + GDP + H(+). The catalysed reaction is N(2)-(1-hydroxy-2-oxopropyl)-GMP + H2O = lactate + GMP + H(+). It catalyses the reaction N(2)-(1-hydroxy-2-oxoethyl)-dGTP + H2O = dGTP + glycolate + H(+). It carries out the reaction N(2)-(1-hydroxy-2-oxoethyl)-GTP + H2O = glycolate + GTP + H(+). The enzyme catalyses N(2)-(1-hydroxy-2-oxoethyl)-GDP + H2O = glycolate + GDP + H(+). The catalysed reaction is N(2)-(1-hydroxy-2-oxoethyl)-GMP + H2O = glycolate + GMP + H(+). It catalyses the reaction an N(2)-(1-hydroxy-2-oxopropyl)-guanosine in RNA + H2O = a guanosine in RNA + lactate + H(+). It carries out the reaction an N(2)-(1-hydroxy-2-oxopropyl)-2'-deoxyguanosine in DNA + H2O = a 2'-deoxyguanosine in DNA + lactate + H(+). The enzyme catalyses an N(2)-(1-hydroxy-2-oxoethyl)-guanosine in RNA + H2O = a guanosine in RNA + glycolate + H(+). The catalysed reaction is an N(2)-(1-hydroxy-2-oxoethyl)-2'-deoxyguanosine in DNA + H2O = a 2'-deoxyguanosine in DNA + glycolate + H(+). Its function is as follows. Protein and nucleotide deglycase that catalyzes the deglycation of the Maillard adducts formed between amino groups of proteins or nucleotides and reactive carbonyl groups of glyoxals. Thus, functions as a protein deglycase that repairs methylglyoxal- and glyoxal-glycated proteins, and releases repaired proteins and lactate or glycolate, respectively. Deglycates cysteine, arginine and lysine residues in proteins, and thus reactivates these proteins by reversing glycation by glyoxals. Acts on early glycation intermediates (hemithioacetals and aminocarbinols), preventing the formation of Schiff bases and advanced glycation endproducts (AGE). Also functions as a nucleotide deglycase able to repair glycated guanine in the free nucleotide pool (GTP, GDP, GMP, dGTP) and in DNA and RNA. Is thus involved in a major nucleotide repair system named guanine glycation repair (GG repair), dedicated to reversing methylglyoxal and glyoxal damage via nucleotide sanitization and direct nucleic acid repair. Plays an important role in protecting cells from carbonyl stress. In Shigella sonnei (strain Ss046), this protein is Protein/nucleic acid deglycase HchA.